The following is a 1205-amino-acid chain: Nitric oxide synthase 3 (1205 aa).

2 disordered regions span residues 1 to 20 and 26 to 73; these read MGNL…LGLG and CGKQ…FPRV. Over residues 33–47 the composition is skewed to pro residues; the sequence is SPAPEPSWAPAPATP. Positions 96 and 101 each coordinate Zn(2+). The segment at 100–489 is interaction with NOSIP; that stretch reads RCLGSLVLPR…PDPWKGSAAK (390 aa). Position 104 (S104) interacts with (6R)-L-erythro-5,6,7,8-tetrahydrobiopterin. A Phosphoserine modification is found at S116. Heme b is bound at residue C186. L-arginine-binding residues include Q250, W359, Y360, and E364. R368 provides a ligand contact to (6R)-L-erythro-5,6,7,8-tetrahydrobiopterin. Residue N369 participates in L-arginine binding. Residues A449, W450, and F463 each contribute to the (6R)-L-erythro-5,6,7,8-tetrahydrobiopterin site. Y478 is a heme b binding site. A Phosphothreonine modification is found at T498. Positions 529, 530, 531, 533, 575, and 576 each coordinate FMN. 3 positions are modified to phosphoserine: S618, S636, and S641. S657, C664, E690, and Q694 together coordinate FMN. R781 serves as a coordination point for NADP(+). The disordered stretch occupies residues 796–850; the sequence is LQYQPGDHISPHPPPRSSHRPGQGGPRVAPFSERPLMPRTPPPGGPPPSWVRDPR. Residue H803 coordinates FAD. Residues 833 to 844 are compositionally biased toward pro residues; sequence PRTPPPGGPPPS. Positions 939, 941, 942, 957, and 959 each coordinate FAD. NADP(+) is bound by residues T1018, R1051, S1080, R1081, K1087, Y1089, and Q1091. T1177 is modified (phosphothreonine). Phosphoserine is present on residues S1179 and S1181.

The protein belongs to the NOS family. As to quaternary structure, homodimer. Interacts with NOSIP and NOSTRIN. Interacts with HSP90AB1. Forms a complex with ASL, ASS1 and SLC7A1; the complex regulates cell-autonomous L-arginine synthesis and citrulline recycling while channeling extracellular L-arginine to nitric oxide synthesis pathway. Heme b serves as cofactor. It depends on FAD as a cofactor. Requires FMN as cofactor. The cofactor is (6R)-L-erythro-5,6,7,8-tetrahydrobiopterin.

Its subcellular location is the membrane. The protein resides in the caveola. It is found in the cytoplasm. It localises to the cytoskeleton. The protein localises to the golgi apparatus. Its subcellular location is the cell membrane. The enzyme catalyses 2 L-arginine + 3 NADPH + 4 O2 + H(+) = 2 L-citrulline + 2 nitric oxide + 3 NADP(+) + 4 H2O. Stimulated by calcium/calmodulin. Inhibited by NOSIP and NOSTRIN. Produces nitric oxide (NO) which is implicated in vascular smooth muscle relaxation through a cGMP-mediated signal transduction pathway. NO mediates vascular endothelial growth factor (VEGF)-induced angiogenesis in coronary vessels and promotes blood clotting through the activation of platelets. In Ovis aries (Sheep), this protein is Nitric oxide synthase 3 (NOS3).